A 209-amino-acid polypeptide reads, in one-letter code: Ras-like GTP-binding protein RYL2 (209 aa).

12–19 (GAQGVGKT) lines the GTP pocket. The short motif at 34-42 (QASTIGASF) is the Effector region element. GTP contacts are provided by residues 60–64 (DTAGQ) and 118–121 (TKVD). 2 S-geranylgeranyl cysteine lipidation sites follow: Cys208 and Cys209.

The protein belongs to the small GTPase superfamily. Rab family.

Its subcellular location is the cell membrane. Functionally, protein transport. Probably involved in vesicular traffic. This is Ras-like GTP-binding protein RYL2 (RYL2) from Yarrowia lipolytica (strain CLIB 122 / E 150) (Yeast).